A 364-amino-acid chain; its full sequence is Dihydroorotate dehydrogenase (quinone) (364 aa).

FMN-binding positions include 61 to 65 and threonine 85; that span reads AGYDK. Lysine 65 provides a ligand contact to substrate. 110–114 serves as a coordination point for substrate; sequence NRLGF. FMN is bound by residues asparagine 139 and asparagine 170. Asparagine 170 lines the substrate pocket. Serine 173 acts as the Nucleophile in catalysis. Residue asparagine 175 coordinates substrate. Residues lysine 215 and serine 243 each contribute to the FMN site. 244-245 lines the substrate pocket; sequence NT. FMN contacts are provided by residues glycine 266, glycine 295, and 316–317; that span reads YT.

It belongs to the dihydroorotate dehydrogenase family. Type 2 subfamily. As to quaternary structure, monomer. Requires FMN as cofactor.

The protein localises to the cell membrane. The catalysed reaction is (S)-dihydroorotate + a quinone = orotate + a quinol. It participates in pyrimidine metabolism; UMP biosynthesis via de novo pathway; orotate from (S)-dihydroorotate (quinone route): step 1/1. Its function is as follows. Catalyzes the conversion of dihydroorotate to orotate with quinone as electron acceptor. This is Dihydroorotate dehydrogenase (quinone) from Brucella anthropi (strain ATCC 49188 / DSM 6882 / CCUG 24695 / JCM 21032 / LMG 3331 / NBRC 15819 / NCTC 12168 / Alc 37) (Ochrobactrum anthropi).